The chain runs to 205 residues: Urease accessory protein UreG (205 aa).

Residue 10–17 (GPVGSGKT) coordinates GTP.

It belongs to the SIMIBI class G3E GTPase family. UreG subfamily. In terms of assembly, homodimer. UreD, UreF and UreG form a complex that acts as a GTP-hydrolysis-dependent molecular chaperone, activating the urease apoprotein by helping to assemble the nickel containing metallocenter of UreC. The UreE protein probably delivers the nickel.

It is found in the cytoplasm. Facilitates the functional incorporation of the urease nickel metallocenter. This process requires GTP hydrolysis, probably effectuated by UreG. The sequence is that of Urease accessory protein UreG from Corynebacterium urealyticum (strain ATCC 43042 / DSM 7109).